The sequence spans 444 residues: Multidrug resistance protein MdtA (444 aa).

The first 20 residues, 1 to 20 (MKSQSKRTSRLFVFVGGVVA), serve as a signal peptide directing secretion. Over residues 37-52 (NNTSGAQQSARGQDTS) the composition is skewed to polar residues. Disordered stretches follow at residues 37–60 (NNTSGAQQSARGQDTSHGGRRNTP) and 398–444 (TPRS…AEKS). Residues 406 to 419 (ANPASAEKAAAEAE) show a composition bias toward low complexity. Residues 435–444 (ARSTTAAEKS) show a composition bias toward polar residues.

This sequence belongs to the membrane fusion protein (MFP) (TC 8.A.1) family. As to quaternary structure, part of a tripartite efflux system composed of MdtA, MdtB and MdtC.

It is found in the cell inner membrane. The polypeptide is Multidrug resistance protein MdtA (Yersinia pseudotuberculosis serotype O:1b (strain IP 31758)).